The chain runs to 262 residues: Sulfur carrier protein FdhD (262 aa).

The active-site Cysteine persulfide intermediate is the Cys-107.

This sequence belongs to the FdhD family.

It localises to the cytoplasm. In terms of biological role, required for formate dehydrogenase (FDH) activity. Acts as a sulfur carrier protein that transfers sulfur from IscS to the molybdenum cofactor prior to its insertion into FDH. This Bacillus subtilis (strain 168) protein is Sulfur carrier protein FdhD.